Here is a 171-residue protein sequence, read N- to C-terminus: 3-hydroxydecanoyl-[acyl-carrier-protein] dehydratase (171 aa).

The active site involves His-70.

Belongs to the thioester dehydratase family. FabA subfamily. Homodimer.

It localises to the cytoplasm. The catalysed reaction is a (3R)-hydroxyacyl-[ACP] = a (2E)-enoyl-[ACP] + H2O. It catalyses the reaction (3R)-hydroxydecanoyl-[ACP] = (2E)-decenoyl-[ACP] + H2O. The enzyme catalyses (2E)-decenoyl-[ACP] = (3Z)-decenoyl-[ACP]. The protein operates within lipid metabolism; fatty acid biosynthesis. Its function is as follows. Necessary for the introduction of cis unsaturation into fatty acids. Catalyzes the dehydration of (3R)-3-hydroxydecanoyl-ACP to E-(2)-decenoyl-ACP and then its isomerization to Z-(3)-decenoyl-ACP. Can catalyze the dehydratase reaction for beta-hydroxyacyl-ACPs with saturated chain lengths up to 16:0, being most active on intermediate chain length. The sequence is that of 3-hydroxydecanoyl-[acyl-carrier-protein] dehydratase from Shewanella sp. (strain ANA-3).